We begin with the raw amino-acid sequence, 166 residues long: Phosphodiesterase MJ0936 (166 aa).

7 residues coordinate Mn(2+): Asp8, His10, Asp36, Asn59, His97, His120, and His122. The Ni(2+) site is built by Asp8, His10, Asp36, Asn59, His97, His120, and His122.

It belongs to the metallophosphoesterase superfamily. YfcE family. As to quaternary structure, monomer. The cofactor is Ni(2+). Mn(2+) is required as a cofactor.

Competitively inhibited by phosphate. In terms of biological role, shows phosphodiesterase activity. Hydrolyzes phosphodiesters bonds in the artificial chromogenic substrates bis-p-nitrophenyl phosphate (bis-pNPP), and less efficiently thymidine 5'-monophosphate p-nitrophenyl ester (pNP-TMP) and p-nitrophenylphosphorylcholine (pNPPC). No catalytic activity was found toward cAMP or cGMP, nucleotides or phospholipase substrates such as phosphatidylcholine. The physiological substrate is unknown. The chain is Phosphodiesterase MJ0936 from Methanocaldococcus jannaschii (strain ATCC 43067 / DSM 2661 / JAL-1 / JCM 10045 / NBRC 100440) (Methanococcus jannaschii).